Consider the following 327-residue polypeptide: Aldo-keto reductase family 1 member A1 (327 aa).

NADP(+) contacts are provided by residues 13–22 (GQKIPLIGLG), threonine 23, tryptophan 24, and aspartate 47. Tyrosine 52 acts as the Proton donor in catalysis. Residues serine 164, asparagine 165, serine 213, leucine 215, serine 217, lysine 265, serine 266, valine 267, threonine 268, arginine 271, glutamine 274, and asparagine 275 each coordinate NADP(+).

It belongs to the aldo/keto reductase family.

It localises to the cytoplasm. The protein localises to the cytosol. It is found in the apical cell membrane. It catalyses the reaction a primary alcohol + NADP(+) = an aldehyde + NADPH + H(+). The enzyme catalyses S-nitroso-CoA + NADPH + H(+) = sulfinamide-CoA + NADP(+). It carries out the reaction S-nitrosoglutathione + NADPH + H(+) = S-(hydroxysulfenamide)glutathione + NADP(+). Its function is as follows. Catalyzes the NADPH-dependent reduction of a wide variety of carbonyl-containing compounds to their corresponding alcohols. Displays enzymatic activity towards endogenous metabolites such as aromatic and aliphatic aldehydes, ketones, monosaccharides and bile acids. Acts as an aldehyde-detoxification enzyme. Also acts as an inhibitor of protein S-nitrosylation by mediating degradation of S-nitroso-coenzyme A (S-nitroso-CoA), a cofactor required to S-nitrosylate proteins. Also acts as a S-nitroso-glutathione reductase by catalyzing the NADPH-dependent reduction of S-nitrosoglutathione. Displays no reductase activity towards retinoids. This Xenopus tropicalis (Western clawed frog) protein is Aldo-keto reductase family 1 member A1 (akr1a1).